The primary structure comprises 368 residues: D-alanine--D-alanine ligase (368 aa).

The 208-residue stretch at 151–358 (KKLLAAEGLP…YGTLVSTLVD (208 aa)) folds into the ATP-grasp domain. An ATP-binding site is contributed by 179–234 (KSRLHLPVFVKPARGGSSIGITRVAEWAALDDAIAHARLHDPKVIVESGIIGREVE). The Mg(2+) site is built by Asp313, Glu325, and Asn327.

This sequence belongs to the D-alanine--D-alanine ligase family. Mg(2+) serves as cofactor. Mn(2+) is required as a cofactor.

The protein localises to the cytoplasm. The catalysed reaction is 2 D-alanine + ATP = D-alanyl-D-alanine + ADP + phosphate + H(+). Its pathway is cell wall biogenesis; peptidoglycan biosynthesis. Cell wall formation. This is D-alanine--D-alanine ligase from Rhodococcus jostii (strain RHA1).